Reading from the N-terminus, the 431-residue chain is Glutamate-1-semialdehyde 2,1-aminomutase (431 aa).

K269 is subject to N6-(pyridoxal phosphate)lysine.

It belongs to the class-III pyridoxal-phosphate-dependent aminotransferase family. HemL subfamily. In terms of assembly, homodimer. Requires pyridoxal 5'-phosphate as cofactor.

Its subcellular location is the cytoplasm. It carries out the reaction (S)-4-amino-5-oxopentanoate = 5-aminolevulinate. It functions in the pathway porphyrin-containing compound metabolism; protoporphyrin-IX biosynthesis; 5-aminolevulinate from L-glutamyl-tRNA(Glu): step 2/2. This is Glutamate-1-semialdehyde 2,1-aminomutase from Francisella tularensis subsp. mediasiatica (strain FSC147).